Reading from the N-terminus, the 511-residue chain is MMAFRAYIINFVILCILVASTVSGYNQKDVKAWCSQTPNPKPCEYFLTHNSNNEPIKSESEFLKISMKLVLDRAILAKTHAFTLGPKCRDTREKAAWEDCIKLYDLTVSKINETMDPNVKCSKLDAQTWLSTALTNLDTCRAGFLELGVTDIVLPLMSNNVSNLLCNTLAINKVPFNYTPPEKDGFPSWVKPGDRKLLQSSTPKDNAVVAKDGSGNFKTIKEAIDAASGSGRFVIYVKQGVYSENLEIRKKNVMLRGDGIGKTIITGSKSVGGGTTTFNSATVAAVGDGFIARGITFRNTAGASNEQAVALRSGSDLSVFYQCSFEAYQDTLYVHSNRQFYRDCDVYGTVDFIFGNAAAVLQNCNIFARRPRSKTNTITAQGRSDPNQNTGIIIHNSRVTAASDLRPVLGSTKTYLGRPWRQYSRTVFMKTSLDSLIDPRGWLEWDGNFALKTLFYAEFQNTGPGASTSGRVTWPGFRVLGSASEASKFTVGTFLAGGSWIPSSVPFTSGL.

An N-terminal signal peptide occupies residues 1–23; the sequence is MMAFRAYIINFVILCILVASTVS. The pectinesterase inhibitor 17 stretch occupies residues 24–171; it reads GYNQKDVKAW…SNLLCNTLAI (148 aa). Residues N112 and N160 are each glycosylated (N-linked (GlcNAc...) asparagine). Residues 237 to 414 are pectinesterase 17; the sequence is VKQGVYSENL…LRPVLGSTKT (178 aa). Residues T277 and Q307 each contribute to the substrate site. D330 functions as the Proton donor; for pectinesterase activity in the catalytic mechanism. Cysteines 344 and 364 form a disulfide. The active-site Nucleophile; for pectinesterase activity is the D351. Substrate-binding residues include R418 and W420.

In the N-terminal section; belongs to the PMEI family. The protein in the C-terminal section; belongs to the pectinesterase family. In terms of tissue distribution, expressed in siliques.

Its subcellular location is the secreted. The protein resides in the cell wall. It catalyses the reaction [(1-&gt;4)-alpha-D-galacturonosyl methyl ester](n) + n H2O = [(1-&gt;4)-alpha-D-galacturonosyl](n) + n methanol + n H(+). It functions in the pathway glycan metabolism; pectin degradation; 2-dehydro-3-deoxy-D-gluconate from pectin: step 1/5. Functionally, acts in the modification of cell walls via demethylesterification of cell wall pectin. The protein is Probable pectinesterase/pectinesterase inhibitor 17 (PME17) of Arabidopsis thaliana (Mouse-ear cress).